Consider the following 122-residue polypeptide: Large ribosomal subunit protein uL14 (122 aa).

Belongs to the universal ribosomal protein uL14 family. In terms of assembly, part of the 50S ribosomal subunit. Forms a cluster with proteins L3 and L19. In the 70S ribosome, L14 and L19 interact and together make contacts with the 16S rRNA in bridges B5 and B8.

Binds to 23S rRNA. Forms part of two intersubunit bridges in the 70S ribosome. In Rhodopirellula baltica (strain DSM 10527 / NCIMB 13988 / SH1), this protein is Large ribosomal subunit protein uL14.